We begin with the raw amino-acid sequence, 97 residues long: Small integral membrane protein 8 (97 aa).

The interval 1–24 (MSSAPEPPTFKKEPPKEKEFQSPG) is disordered. The segment covering 9–20 (TFKKEPPKEKEF) has biased composition (basic and acidic residues). Residues 48 to 70 (PVMAFGLVTLSLCVAYIGYLHAI) form a helical membrane-spanning segment.

The protein belongs to the SMIM8 family.

The protein localises to the membrane. This is Small integral membrane protein 8 (SMIM8) from Homo sapiens (Human).